Here is a 74-residue protein sequence, read N- to C-terminus: Antimicrobial peptide 1 (74 aa).

The N-terminal stretch at 1–22 (MEIKYLLTVFLVLLIGSDYCQA) is a signal peptide. Lys-40 bears the Lysine amide mark. Positions 46–74 (DLDGQIDRSRNFRKRDAELEELLSKLPIY) are excised as a propeptide.

As to expression, expressed by the venom gland.

Its subcellular location is the secreted. It is found in the target cell membrane. In terms of biological role, has antibacterial activity against the Gram-positive bacteria S.aureus (MIC=20 uM), the Gram-negative bacteria E.coli (MIC=150 uM), and the yeast C.albicans (MIC=64 uM). Causes hemolysis on horse erythrocytes. This chain is Antimicrobial peptide 1, found in Androctonus amoreuxi (African fattail scorpion).